The primary structure comprises 228 residues: Elongation factor 1-beta (228 aa).

The tract at residues 74–116 (ASKAFTAYGPEGSEASANPKDKPAEEEEEEDLFASDSEDEDPA) is disordered. An igE-binding region spans residues 84 to 93 (EGSEASANPK). Residues 97 to 115 (AEEEEEEDLFASDSEDEDP) are compositionally biased toward acidic residues.

The protein belongs to the EF-1-beta/EF-1-delta family. In terms of assembly, EF-1 is composed of 4 subunits: alpha, beta, delta, and gamma.

EF-1-beta and EF-1-delta stimulate the exchange of GDP bound to EF-1-alpha to GTP. In Penicillium citrinum, this protein is Elongation factor 1-beta.